The following is a 367-amino-acid chain: Alanine racemase (367 aa).

Residue Lys-40 is the Proton acceptor; specific for D-alanine of the active site. Lys-40 is subject to N6-(pyridoxal phosphate)lysine. Arg-136 lines the substrate pocket. Catalysis depends on Tyr-263, which acts as the Proton acceptor; specific for L-alanine. Position 310 (Met-310) interacts with substrate.

It belongs to the alanine racemase family. It depends on pyridoxal 5'-phosphate as a cofactor.

The catalysed reaction is L-alanine = D-alanine. It functions in the pathway amino-acid biosynthesis; D-alanine biosynthesis; D-alanine from L-alanine: step 1/1. Catalyzes the interconversion of L-alanine and D-alanine. May also act on other amino acids. The polypeptide is Alanine racemase (alr) (Streptococcus pneumoniae (strain Hungary19A-6)).